A 562-amino-acid chain; its full sequence is MLEEAGEVLESVLKASCLPLSFLLFVPAVLLLLGPPPAAEAAHESTVYRMQQYELGGQPYGTRSAVLNTEARTVEADVLSRRCVMMRLVDFSYEQYQKALRQSAGAVVIILPRSISSVPQDVVKQFMEIEPEMLAMETIVPVYFAVEDDELLSIYEQTRAASASQGSASAAEVLLHTATANGFQMVTSGAQSKAIHDWLIPSVEGRLTGLGGEDLPTVVIVAHYDSFGVAPWLSHGADSNGSGVSVLLELARLFSRLYTYRRTHAGYNLLFFASGGGKFNYQGTKRWLEDNLDHTDSSLLQDNVAFVLCLDTLGRGNSLHLHVSKPPKEGTLQHAFLRELEMVVASQFPEVKFSMVHKKINLAEDILAWEHERFAIRRLPAFTISHLESHRDSLRNSIMDRRSQVDTKALTQEYQDHCGGFDEGHLQPNREGSTCRSADLHGSDADPGGAARISDGLAEQSAQAAQLIDKDSTFLSTLEYYMGRYLKDVKQHHVKADKRDPEFVFYDQLKQVMNAYRVKPAIFDLLLAVCIAAYLGVAYVAVQNFGLLYRMIQRLSLKTKQQ.

Positions 1–41 (MLEEAGEVLESVLKASCLPLSFLLFVPAVLLLLGPPPAAEA) are cleaved as a signal peptide. Over 42–521 (AHESTVYRMQ…VMNAYRVKPA (480 aa)) the chain is Extracellular. Asparagine 240 carries an N-linked (GlcNAc...) asparagine glycan. Residues 420-447 (GFDEGHLQPNREGSTCRSADLHGSDADP) form a disordered region. Residues 522–542 (IFDLLLAVCIAAYLGVAYVAV) form a helical membrane-spanning segment. The Cytoplasmic portion of the chain corresponds to 543-562 (QNFGLLYRMIQRLSLKTKQQ).

Belongs to the nicastrin family. Component of the multi-pass translocon (MPT) complex.

It localises to the endoplasmic reticulum membrane. In terms of biological role, component of the multi-pass translocon (MPT) complex that mediates insertion of multi-pass membrane proteins into the lipid bilayer of membranes. The MPT complex takes over after the SEC61 complex: following membrane insertion of the first few transmembrane segments of proteins by the SEC61 complex, the MPT complex occludes the lateral gate of the SEC61 complex to promote insertion of subsequent transmembrane regions. May antagonize Nodal signaling and subsequent organization of axial structures during mesodermal patterning, via its interaction with NOMO. The protein is BOS complex subunit NCLN (NCLN) of Gallus gallus (Chicken).